The sequence spans 349 residues: Phenylalanine--tRNA ligase alpha subunit (349 aa).

Position 258 (E258) interacts with Mg(2+).

Belongs to the class-II aminoacyl-tRNA synthetase family. Phe-tRNA synthetase alpha subunit type 1 subfamily. As to quaternary structure, tetramer of two alpha and two beta subunits. Requires Mg(2+) as cofactor.

The protein localises to the cytoplasm. It carries out the reaction tRNA(Phe) + L-phenylalanine + ATP = L-phenylalanyl-tRNA(Phe) + AMP + diphosphate + H(+). The sequence is that of Phenylalanine--tRNA ligase alpha subunit from Rickettsia bellii (strain RML369-C).